Reading from the N-terminus, the 264-residue chain is 3-deoxy-manno-octulosonate cytidylyltransferase (264 aa).

It belongs to the KdsB family.

The protein localises to the cytoplasm. It carries out the reaction 3-deoxy-alpha-D-manno-oct-2-ulosonate + CTP = CMP-3-deoxy-beta-D-manno-octulosonate + diphosphate. It functions in the pathway nucleotide-sugar biosynthesis; CMP-3-deoxy-D-manno-octulosonate biosynthesis; CMP-3-deoxy-D-manno-octulosonate from 3-deoxy-D-manno-octulosonate and CTP: step 1/1. Its pathway is bacterial outer membrane biogenesis; lipopolysaccharide biosynthesis. Its function is as follows. Activates KDO (a required 8-carbon sugar) for incorporation into bacterial lipopolysaccharide in Gram-negative bacteria. This is 3-deoxy-manno-octulosonate cytidylyltransferase from Methylibium petroleiphilum (strain ATCC BAA-1232 / LMG 22953 / PM1).